A 492-amino-acid chain; its full sequence is Probable cobyric acid synthase (492 aa).

The GATase cobBQ-type domain occupies 252-444; the sequence is PIEVNIVKFS…FHGILENFEF (193 aa). The active-site Nucleophile is the C330. H436 is a catalytic residue.

This sequence belongs to the CobB/CobQ family. CobQ subfamily.

It functions in the pathway cofactor biosynthesis; adenosylcobalamin biosynthesis. Functionally, catalyzes amidations at positions B, D, E, and G on adenosylcobyrinic A,C-diamide. NH(2) groups are provided by glutamine, and one molecule of ATP is hydrogenolyzed for each amidation. This chain is Probable cobyric acid synthase, found in Methanococcus maripaludis (strain C7 / ATCC BAA-1331).